Consider the following 286-residue polypeptide: Probable 4-deoxy-4-formamido-L-arabinose-phosphoundecaprenol deformylase ArnD (286 aa).

The region spanning 1-248 is the NodB homology domain; it reads MGTKLGVPNL…IAINEGINFC (248 aa).

Belongs to the polysaccharide deacetylase family. ArnD deformylase subfamily.

It carries out the reaction 4-deoxy-4-formamido-alpha-L-arabinopyranosyl di-trans,octa-cis-undecaprenyl phosphate + H2O = 4-amino-4-deoxy-alpha-L-arabinopyranosyl di-trans,octa-cis-undecaprenyl phosphate + formate. The protein operates within glycolipid biosynthesis; 4-amino-4-deoxy-alpha-L-arabinose undecaprenyl phosphate biosynthesis; 4-amino-4-deoxy-alpha-L-arabinose undecaprenyl phosphate from UDP-4-deoxy-4-formamido-beta-L-arabinose and undecaprenyl phosphate: step 2/2. Its pathway is bacterial outer membrane biogenesis; lipopolysaccharide biosynthesis. Functionally, catalyzes the deformylation of 4-deoxy-4-formamido-L-arabinose-phosphoundecaprenol to 4-amino-4-deoxy-L-arabinose-phosphoundecaprenol. The modified arabinose is attached to lipid A and is required for resistance to polymyxin and cationic antimicrobial peptides. In Wigglesworthia glossinidia brevipalpis, this protein is Probable 4-deoxy-4-formamido-L-arabinose-phosphoundecaprenol deformylase ArnD.